The primary structure comprises 360 residues: 3-dehydroquinate synthase (360 aa).

Residues 71–76 (DGEQYK), 105–109 (GVVGD), 129–130 (TT), lysine 142, lysine 151, and 169–172 (TLNT) contribute to the NAD(+) site. Residues glutamate 184, histidine 248, and histidine 265 each contribute to the Zn(2+) site.

Belongs to the sugar phosphate cyclases superfamily. Dehydroquinate synthase family. Co(2+) serves as cofactor. It depends on Zn(2+) as a cofactor. The cofactor is NAD(+).

The protein resides in the cytoplasm. The catalysed reaction is 7-phospho-2-dehydro-3-deoxy-D-arabino-heptonate = 3-dehydroquinate + phosphate. Its pathway is metabolic intermediate biosynthesis; chorismate biosynthesis; chorismate from D-erythrose 4-phosphate and phosphoenolpyruvate: step 2/7. In terms of biological role, catalyzes the conversion of 3-deoxy-D-arabino-heptulosonate 7-phosphate (DAHP) to dehydroquinate (DHQ). The sequence is that of 3-dehydroquinate synthase from Coxiella burnetii (strain RSA 331 / Henzerling II).